The sequence spans 756 residues: Pro-neuregulin-2, membrane-bound isoform (756 aa).

The propeptide occupies 1–19 (MRRDPAPGFSMLLFGVSLA). Over 20–315 (CYSPSLKSVQ…KEAEELYQKR (296 aa)) the chain is Extracellular. Asn-55, Asn-186, and Asn-254 each carry an N-linked (GlcNAc...) asparagine glycan. Positions 145–240 (PKLKKMKSQT…RGRLHVNSVS (96 aa)) constitute an Ig-like C2-type domain. Cystine bridges form between Cys-165-Cys-219, Cys-253-Cys-267, Cys-261-Cys-278, and Cys-280-Cys-289. The EGF-like domain occupies 249–290 (HARKCNETAKSYCVNGGVCYYIEGINQLSCKCPVGYTGDRCQ). Asn-296 carries N-linked (GlcNAc...) asparagine glycosylation. The chain crosses the membrane as a helical span at residues 316-336 (VLTITGICVALLVVGIVCVVA). At 337 to 756 (YCKTKKQRRQ…TRAKQDSGPL (420 aa)) the chain is on the cytoplasmic side. Disordered stretches follow at residues 402-439 (TFSG…SESL), 557-578 (LLRH…DMQR), 608-694 (ASPF…DGAL), and 711-756 (LRSD…SGPL). The span at 404 to 416 (SGSHSCSPSHHCS) shows a compositional bias: low complexity. Basic and acidic residues predominate over residues 424 to 437 (HRHESHTWSLERSE). Over residues 654 to 682 (LNGLAAQRARAARDSLSLSSGSGCGSASA) the composition is skewed to low complexity.

This sequence belongs to the neuregulin family. In terms of assembly, interacts with ERBB3 and ERBB4. In terms of processing, proteolytic cleavage close to the plasma membrane on the external face leads to the release of the soluble growth factor form. Post-translationally, extensive glycosylation precedes the proteolytic cleavage. In terms of tissue distribution, highest expression in the brain, with lower levels in the lung. In the cerebellum, found in granule and Purkinje cells.

It localises to the cell membrane. The protein localises to the secreted. Functionally, direct ligand for ERBB3 and ERBB4 tyrosine kinase receptors. Concomitantly recruits ERBB1 and ERBB2 coreceptors, resulting in ligand-stimulated tyrosine phosphorylation and activation of the ERBB receptors. May also promote the heterodimerization with the EGF receptor. The chain is Pro-neuregulin-2, membrane-bound isoform (Nrg2) from Mus musculus (Mouse).